The following is a 314-amino-acid chain: Homoserine O-acetyltransferase (314 aa).

The active-site Acyl-thioester intermediate is Cys-142. Lys-163 and Ser-192 together coordinate substrate. His-235 acts as the Proton acceptor in catalysis. Glu-237 is a catalytic residue. Arg-249 is a substrate binding site.

The protein belongs to the MetA family.

The protein localises to the cytoplasm. The enzyme catalyses L-homoserine + acetyl-CoA = O-acetyl-L-homoserine + CoA. It participates in amino-acid biosynthesis; L-methionine biosynthesis via de novo pathway; O-acetyl-L-homoserine from L-homoserine: step 1/1. Transfers an acetyl group from acetyl-CoA to L-homoserine, forming acetyl-L-homoserine. The sequence is that of Homoserine O-acetyltransferase from Streptococcus pneumoniae serotype 4 (strain ATCC BAA-334 / TIGR4).